The sequence spans 576 residues: Arginine--tRNA ligase (576 aa).

The 'HIGH' region signature appears at 126–136; that stretch reads ANPTGPMHIGH.

Belongs to the class-I aminoacyl-tRNA synthetase family. In terms of assembly, monomer.

Its subcellular location is the cytoplasm. It catalyses the reaction tRNA(Arg) + L-arginine + ATP = L-arginyl-tRNA(Arg) + AMP + diphosphate. This is Arginine--tRNA ligase from Rickettsia canadensis (strain McKiel).